A 122-amino-acid polypeptide reads, in one-letter code: Large ribosomal subunit protein uL18 (122 aa).

It belongs to the universal ribosomal protein uL18 family. Part of the 50S ribosomal subunit; part of the 5S rRNA/L5/L18/L25 subcomplex. Contacts the 5S and 23S rRNAs.

In terms of biological role, this is one of the proteins that bind and probably mediate the attachment of the 5S RNA into the large ribosomal subunit, where it forms part of the central protuberance. This chain is Large ribosomal subunit protein uL18, found in Pseudothermotoga lettingae (strain ATCC BAA-301 / DSM 14385 / NBRC 107922 / TMO) (Thermotoga lettingae).